The following is a 197-amino-acid chain: Dephospho-CoA kinase (197 aa).

Positions 4 to 197 (RLGLTGSIGM…RQIRAGNIHA (194 aa)) constitute a DPCK domain. Position 12–17 (12–17 (GMGKST)) interacts with ATP.

This sequence belongs to the CoaE family.

It is found in the cytoplasm. The enzyme catalyses 3'-dephospho-CoA + ATP = ADP + CoA + H(+). It participates in cofactor biosynthesis; coenzyme A biosynthesis; CoA from (R)-pantothenate: step 5/5. Functionally, catalyzes the phosphorylation of the 3'-hydroxyl group of dephosphocoenzyme A to form coenzyme A. The chain is Dephospho-CoA kinase from Ruegeria pomeroyi (strain ATCC 700808 / DSM 15171 / DSS-3) (Silicibacter pomeroyi).